Reading from the N-terminus, the 80-residue chain is uncharacterized protein (80 aa).

Functionally, essential for virus function. This is an uncharacterized protein from Sulfolobus spindle-shape virus 1 (SSV1).